The chain runs to 270 residues: Formamidopyrimidine-DNA glycosylase (270 aa).

The active-site Schiff-base intermediate with DNA is Pro2. Glu3 (proton donor) is an active-site residue. Lys57 functions as the Proton donor; for beta-elimination activity in the catalytic mechanism. Residues His90, Arg109, and Lys150 each coordinate DNA. The FPG-type zinc-finger motif lies at Gln235–Lys269. The active-site Proton donor; for delta-elimination activity is Arg259.

This sequence belongs to the FPG family. As to quaternary structure, monomer. Zn(2+) is required as a cofactor.

It carries out the reaction Hydrolysis of DNA containing ring-opened 7-methylguanine residues, releasing 2,6-diamino-4-hydroxy-5-(N-methyl)formamidopyrimidine.. It catalyses the reaction 2'-deoxyribonucleotide-(2'-deoxyribose 5'-phosphate)-2'-deoxyribonucleotide-DNA = a 3'-end 2'-deoxyribonucleotide-(2,3-dehydro-2,3-deoxyribose 5'-phosphate)-DNA + a 5'-end 5'-phospho-2'-deoxyribonucleoside-DNA + H(+). Involved in base excision repair of DNA damaged by oxidation or by mutagenic agents. Acts as a DNA glycosylase that recognizes and removes damaged bases. Has a preference for oxidized purines, such as 7,8-dihydro-8-oxoguanine (8-oxoG). Has AP (apurinic/apyrimidinic) lyase activity and introduces nicks in the DNA strand. Cleaves the DNA backbone by beta-delta elimination to generate a single-strand break at the site of the removed base with both 3'- and 5'-phosphates. This is Formamidopyrimidine-DNA glycosylase from Actinobacillus succinogenes (strain ATCC 55618 / DSM 22257 / CCUG 43843 / 130Z).